The sequence spans 71 residues: Long neurotoxin 3 (71 aa).

5 disulfides stabilise this stretch: cysteine 3/cysteine 20, cysteine 14/cysteine 41, cysteine 26/cysteine 30, cysteine 45/cysteine 56, and cysteine 57/cysteine 62.

Belongs to the three-finger toxin family. Long-chain subfamily. Type II alpha-neurotoxin sub-subfamily. In terms of tissue distribution, expressed by the venom gland.

It is found in the secreted. In terms of biological role, binds with high affinity to muscular (alpha-1/CHRNA1) and neuronal (alpha-7/CHRNA7) nicotinic acetylcholine receptor (nAChR) and inhibits acetylcholine from binding to the receptor, thereby impairing neuromuscular and neuronal transmission. The chain is Long neurotoxin 3 from Naja naja (Indian cobra).